The following is a 383-amino-acid chain: Agmatine deiminase (383 aa).

Residues Asp220 and Asp226 each coordinate agmatine. Cys366 serves as the catalytic Amidino-cysteine intermediate.

Belongs to the agmatine deiminase family. In terms of assembly, forms homodimers.

It catalyses the reaction agmatine + H2O = N-carbamoylputrescine + NH4(+). It participates in amine and polyamine biosynthesis; putrescine biosynthesis via agmatine pathway; N-carbamoylputrescine from agmatine: step 1/1. With respect to regulation, inhibited by N-ethylmaleimide and iodoacetamide. Functionally, mediates the hydrolysis of agmatine into N-carbamoylputrescine in the arginine decarboxylase (ADC) pathway of putrescine biosynthesis, a basic polyamine. The polypeptide is Agmatine deiminase (AIH) (Arabidopsis thaliana (Mouse-ear cress)).